Here is a 275-residue protein sequence, read N- to C-terminus: Formamidopyrimidine-DNA glycosylase (275 aa).

Catalysis depends on Pro-2, which acts as the Schiff-base intermediate with DNA. Glu-3 (proton donor) is an active-site residue. Lys-58 functions as the Proton donor; for beta-elimination activity in the catalytic mechanism. Residues His-93, Arg-111, and Arg-156 each coordinate DNA. Residues 241-275 (FVYDRAGEPCRVCGTPIRQIVQGQRSTYFCPTCQR) form an FPG-type zinc finger. Arg-265 (proton donor; for delta-elimination activity) is an active-site residue.

This sequence belongs to the FPG family. Monomer. Requires Zn(2+) as cofactor.

The catalysed reaction is Hydrolysis of DNA containing ring-opened 7-methylguanine residues, releasing 2,6-diamino-4-hydroxy-5-(N-methyl)formamidopyrimidine.. It carries out the reaction 2'-deoxyribonucleotide-(2'-deoxyribose 5'-phosphate)-2'-deoxyribonucleotide-DNA = a 3'-end 2'-deoxyribonucleotide-(2,3-dehydro-2,3-deoxyribose 5'-phosphate)-DNA + a 5'-end 5'-phospho-2'-deoxyribonucleoside-DNA + H(+). Its function is as follows. Involved in base excision repair of DNA damaged by oxidation or by mutagenic agents. Acts as a DNA glycosylase that recognizes and removes damaged bases. Has a preference for oxidized purines, such as 7,8-dihydro-8-oxoguanine (8-oxoG). Has AP (apurinic/apyrimidinic) lyase activity and introduces nicks in the DNA strand. Cleaves the DNA backbone by beta-delta elimination to generate a single-strand break at the site of the removed base with both 3'- and 5'-phosphates. The protein is Formamidopyrimidine-DNA glycosylase of Burkholderia multivorans (strain ATCC 17616 / 249).